Reading from the N-terminus, the 52-residue chain is Protein YabQ (52 aa).

In terms of biological role, identified as a multicopy suppressor of the slow growth phenotype of an rsgA (yjeQ) deletion mutant. The chain is Protein YabQ (yabQ) from Escherichia coli (strain K12).